Reading from the N-terminus, the 578-residue chain is Arginine--tRNA ligase (578 aa).

The short motif at 127–137 (PNLAKEMHVGH) is the 'HIGH' region element.

It belongs to the class-I aminoacyl-tRNA synthetase family. As to quaternary structure, monomer.

It localises to the cytoplasm. The catalysed reaction is tRNA(Arg) + L-arginine + ATP = L-arginyl-tRNA(Arg) + AMP + diphosphate. The polypeptide is Arginine--tRNA ligase (Pseudomonas putida (strain ATCC 700007 / DSM 6899 / JCM 31910 / BCRC 17059 / LMG 24140 / F1)).